The chain runs to 483 residues: UDP-N-acetylmuramoyl-L-alanyl-D-glutamate--L-lysine ligase (483 aa).

Ser-44 is a binding site for UDP-N-acetyl-alpha-D-muramoyl-L-alanyl-D-glutamate. 120–126 (GTKGKTT) serves as a coordination point for ATP. UDP-N-acetyl-alpha-D-muramoyl-L-alanyl-D-glutamate is bound by residues 162–163 (TT), Ser-189, and Arg-197. An N6-carboxylysine modification is found at Lys-231. The L-lysine recognition motif signature appears at 406–409 (DDPN).

It belongs to the MurCDEF family. MurE subfamily. In terms of processing, carboxylation is probably crucial for Mg(2+) binding and, consequently, for the gamma-phosphate positioning of ATP.

The protein localises to the cytoplasm. It carries out the reaction UDP-N-acetyl-alpha-D-muramoyl-L-alanyl-D-glutamate + L-lysine + ATP = UDP-N-acetyl-alpha-D-muramoyl-L-alanyl-gamma-D-glutamyl-L-lysine + ADP + phosphate + H(+). It participates in cell wall biogenesis; peptidoglycan biosynthesis. In terms of biological role, catalyzes the addition of L-lysine to the nucleotide precursor UDP-N-acetylmuramoyl-L-alanyl-D-glutamate (UMAG) in the biosynthesis of bacterial cell-wall peptidoglycan. The polypeptide is UDP-N-acetylmuramoyl-L-alanyl-D-glutamate--L-lysine ligase (Streptococcus mutans serotype c (strain ATCC 700610 / UA159)).